The sequence spans 516 residues: MDFNAAVCAALAFISLLSYYLIWLRSASTHQAPPEAGGAWPFLGHLNIISGHTGLPHVSLGNLADKHGPIFGIRIGVHRAVVVSSSEVIKELFTTNDAAVSSRPSVKAGKHLAYDYAMLGFSSYGTYWRQMRKLVSLELFSARRVELQRNVRVSETAHFINELYSAWEERRDGSSRVSVEMKELFGELSMNVILKMVAGKRFSGGDDAEEARRCRRVMREFFHLAGLFVLSDAFPYLGWLDLGGHERRMKRTAEEMDELVGEWLAEHRRKEYSGEGKAQDFMDVMLSEVKGANFECEYDVDTIIKATCGTLIAGGTDTTAVVFIWALALLLNNPHVLQKAQHELDTHVGKQRRVNESDLNNLVYLQAITKETLRLYPPGPLGGTRRLTQDCHVGGYHIPKETWLIVNLWKLHRDPRVWSDPSEFRPERFLNGEKSMDVKGQDFELIPFSAGRRICPGTNFGLQMLHLVLASLLQAFDLSRVSNEEIDMSESAGLTNIKATPLDVLIAPRLPPSLYI.

A helical transmembrane segment spans residues 3-23; sequence FNAAVCAALAFISLLSYYLIW. Cys455 is a heme binding site.

The protein belongs to the cytochrome P450 family. Requires heme as cofactor.

The protein localises to the membrane. The enzyme catalyses genkwanin + reduced [NADPH--hemoprotein reductase] + O2 = scutellarein 7-methyl ether + oxidized [NADPH--hemoprotein reductase] + H2O. The catalysed reaction is (2S)-sakuranetin + reduced [NADPH--hemoprotein reductase] + O2 = (2S)-7-methylcarthamidin + oxidized [NADPH--hemoprotein reductase] + H2O + H(+). It carries out the reaction apigenin 4',7-dimethyl ether + reduced [NADPH--hemoprotein reductase] + O2 = ladanein + oxidized [NADPH--hemoprotein reductase] + H2O + H(+). It catalyses the reaction (2S)-naringenin 4',7-dimethyl ether + reduced [NADPH--hemoprotein reductase] + O2 = (2S)-carthamidin-4',7-dimethyl ether + oxidized [NADPH--hemoprotein reductase] + H2O + H(+). It functions in the pathway flavonoid metabolism. Functionally, 6-OH hydroxylase involved in the biosynthesis of polymethoxylated flavonoids natural products such as pebrellin, aroma compounds which contribute to the flavor of peppermint, and exhibit pharmacological activities such as anti-allergic, anti-oxidant, antibacterial, anti-proliferative, and anti-inflammatory effects. Catalyzes the 6-hydroxylation of 7-O-methylated precursors such as the conversion of genkwanin (GENK) to scutellarein-7-methyl ether (SCU7Me). Can also use apigenin-7,4'-dimethyl ether (AdM), naringenin-7-methyl ether (SAK) and naringenin-7,4'-dimethyl ether (NdM) as substrates. The protein is Flavonoid-6-hydroxylase of Mentha piperita (Peppermint).